The sequence spans 224 residues: Zinc finger C4H2 domain-containing protein (224 aa).

A coiled-coil region spans residues 12-97 (ENIKEIRNKT…NKLLESTRRL (86 aa)). 2 disordered regions span residues 166-185 (QAARKQDARQTATFRQQPPP) and 204-224 (PLCKAKSRSRNPKKPKRKPDE). A C4H2-type zinc finger spans residues 189–206 (CLSCHQQIHRNAPICPLC). Positions 208–224 (AKSRSRNPKKPKRKPDE) are enriched in basic residues.

The protein resides in the nucleus. The protein localises to the cytoplasm. Its subcellular location is the postsynaptic cell membrane. Functionally, plays a role in GABAergic and V2 interneurons differentiation. Involved in motoneuron development and in neuromuscular junction formation. This Danio rerio (Zebrafish) protein is Zinc finger C4H2 domain-containing protein (zc4h2).